We begin with the raw amino-acid sequence, 136 residues long: MSQLVYFSSSSENTHRFMQRLGLPAIRIPLNERERIRVDEPYILVVPSYGGGGTAGAVPRQVIRFLNDEHNRALIRGVIASGNRNFGEAYGRAGEVISQKCGVPWLYRFELMGTQSDIDNVRKGVSEFWQRQPQNV.

Belongs to the NrdI family.

Its function is as follows. Probably involved in ribonucleotide reductase function. This Citrobacter koseri (strain ATCC BAA-895 / CDC 4225-83 / SGSC4696) protein is Protein NrdI.